The primary structure comprises 73 residues: Putative membrane protein insertion efficiency factor (73 aa).

The protein belongs to the UPF0161 family.

It localises to the cell inner membrane. Its function is as follows. Could be involved in insertion of integral membrane proteins into the membrane. In Rickettsia bellii (strain OSU 85-389), this protein is Putative membrane protein insertion efficiency factor.